A 324-amino-acid chain; its full sequence is Beta-ketoacyl-[acyl-carrier-protein] synthase III (324 aa).

Residues Cys-112 and His-249 contribute to the active site. The ACP-binding stretch occupies residues 250–254 (QANIR). Asn-279 is an active-site residue.

Belongs to the thiolase-like superfamily. FabH family. In terms of assembly, homodimer.

Its subcellular location is the cytoplasm. The enzyme catalyses malonyl-[ACP] + acetyl-CoA + H(+) = 3-oxobutanoyl-[ACP] + CO2 + CoA. It functions in the pathway lipid metabolism; fatty acid biosynthesis. Catalyzes the condensation reaction of fatty acid synthesis by the addition to an acyl acceptor of two carbons from malonyl-ACP. Catalyzes the first condensation reaction which initiates fatty acid synthesis and may therefore play a role in governing the total rate of fatty acid production. Possesses both acetoacetyl-ACP synthase and acetyl transacylase activities. Its substrate specificity determines the biosynthesis of branched-chain and/or straight-chain of fatty acids. The chain is Beta-ketoacyl-[acyl-carrier-protein] synthase III from Streptococcus sanguinis (strain SK36).